The sequence spans 122 residues: Large ribosomal subunit protein uL14 (122 aa).

It belongs to the universal ribosomal protein uL14 family. As to quaternary structure, part of the 50S ribosomal subunit. Forms a cluster with proteins L3 and L19. In the 70S ribosome, L14 and L19 interact and together make contacts with the 16S rRNA in bridges B5 and B8.

Binds to 23S rRNA. Forms part of two intersubunit bridges in the 70S ribosome. This chain is Large ribosomal subunit protein uL14, found in Streptomyces griseus subsp. griseus (strain JCM 4626 / CBS 651.72 / NBRC 13350 / KCC S-0626 / ISP 5235).